We begin with the raw amino-acid sequence, 262 residues long: Type III pantothenate kinase (262 aa).

9-16 provides a ligand contact to ATP; sequence DIGNTNIV. Substrate is bound by residues Tyr103 and 110 to 113; that span reads GVDR. The active-site Proton acceptor is the Asp112. Asp132 serves as a coordination point for K(+). Residue Thr135 coordinates ATP. Residue Thr187 coordinates substrate.

It belongs to the type III pantothenate kinase family. As to quaternary structure, homodimer. Requires NH4(+) as cofactor. It depends on K(+) as a cofactor.

The protein resides in the cytoplasm. It catalyses the reaction (R)-pantothenate + ATP = (R)-4'-phosphopantothenate + ADP + H(+). The protein operates within cofactor biosynthesis; coenzyme A biosynthesis; CoA from (R)-pantothenate: step 1/5. In terms of biological role, catalyzes the phosphorylation of pantothenate (Pan), the first step in CoA biosynthesis. The sequence is that of Type III pantothenate kinase from Finegoldia magna (strain ATCC 29328 / DSM 20472 / WAL 2508) (Peptostreptococcus magnus).